The primary structure comprises 349 residues: Anaerobic nitrite reductase Glb1-3 (349 aa).

2 consecutive Globin domains span residues 13 to 162 (GFTE…AEMK) and 184 to 333 (CFTE…AEMK). The heme b site is built by Ser-56, Lys-70, His-74, Lys-104, Thr-108, His-109, Ser-227, Lys-241, His-245, Lys-275, Thr-279, and His-280.

It belongs to the plant globin family. As to quaternary structure, monomer. It depends on heme b as a cofactor.

It is found in the cytoplasm. Its subcellular location is the nucleus. It catalyses the reaction Fe(III)-heme b-[protein] + nitric oxide + H2O = Fe(II)-heme b-[protein] + nitrite + 2 H(+). Phytoglobin that regulates the fine tuning of nitric oxide (NO) concentration in the cytosol in response to sudden changes in O(2) availability, and performs both symbiotic and nonsymbiotic functions. Exhibits NO dioxygenase activity in the presence of O(2) but nitrite reductase (NiR) activity in the absence of O(2) (e.g. during flooding or in waterlogged soil). May not function as an oxygen storage or transport protein. Extremely reactive toward the physiological ligands O(2), nitric oxide (NO), and nitrite with a very high affinity for O(2) through an hexacoordinate heme iron because of a very low dissociation constant. The chain is Anaerobic nitrite reductase Glb1-3 from Medicago truncatula (Barrel medic).